A 557-amino-acid chain; its full sequence is Potassium-transporting ATPase potassium-binding subunit (557 aa).

12 consecutive transmembrane segments (helical) span residues 5–25 (GFLLIATFLLVLMVLARPLGS), 63–83 (LCAILGLNMLGLAVLFFMLLG), 132–152 (GLTVQNFLSAASGIAVIFAFI), 170–190 (LLRITLWVLVPVALLIALFFI), 253–273 (FVQMLAIFLIPTALCFAFGEV), 283–303 (LLWAMSVIFVICVGVVMWAEV), 329–349 (VLVSSLFAVVTTAASCGAVIA), 356–376 (ALGGMVPMWLMQIGEVVFGGV), 379–399 (GLYGMMLFVLLAVFIAGLMIG), 416–436 (LTALAILVTPTLVLMGAALAM), 484–504 (LLAFCMFVGRFGVIIPVMAIA), and 526–546 (LFVGLLIGTVLLVGALTFIPA).

The protein belongs to the KdpA family. The system is composed of three essential subunits: KdpA, KdpB and KdpC.

The protein localises to the cell inner membrane. Part of the high-affinity ATP-driven potassium transport (or Kdp) system, which catalyzes the hydrolysis of ATP coupled with the electrogenic transport of potassium into the cytoplasm. This subunit binds the periplasmic potassium ions and delivers the ions to the membrane domain of KdpB through an intramembrane tunnel. In Shigella boydii serotype 4 (strain Sb227), this protein is Potassium-transporting ATPase potassium-binding subunit.